A 1018-amino-acid chain; its full sequence is Isoleucine--tRNA ligase (1018 aa).

The 'HIGH' region signature appears at 43-53 (PYTTGRIHLGT). The 'KMSKS' region signature appears at 586 to 590 (KMSKS). Lys589 is an ATP binding site.

Belongs to the class-I aminoacyl-tRNA synthetase family. IleS type 2 subfamily. As to quaternary structure, monomer. Zn(2+) is required as a cofactor.

The protein resides in the cytoplasm. The catalysed reaction is tRNA(Ile) + L-isoleucine + ATP = L-isoleucyl-tRNA(Ile) + AMP + diphosphate. Functionally, catalyzes the attachment of isoleucine to tRNA(Ile). As IleRS can inadvertently accommodate and process structurally similar amino acids such as valine, to avoid such errors it has two additional distinct tRNA(Ile)-dependent editing activities. One activity is designated as 'pretransfer' editing and involves the hydrolysis of activated Val-AMP. The other activity is designated 'posttransfer' editing and involves deacylation of mischarged Val-tRNA(Ile). The protein is Isoleucine--tRNA ligase of Archaeoglobus fulgidus (strain ATCC 49558 / DSM 4304 / JCM 9628 / NBRC 100126 / VC-16).